A 968-amino-acid chain; its full sequence is Catenin delta-1 (968 aa).

Residue Met-1 is modified to N-acetylmethionine. The segment at Met-1 to Gly-357 is necessary and sufficient for interaction with CCDC85B. Ser-4 carries the phosphoserine modification. The stretch at Ala-10–Val-46 forms a coiled coil. Phosphoserine is present on Ser-47. Phosphothreonine is present on Thr-59. Position 112 is a phosphotyrosine; by FYN (Tyr-112). Ser-125 carries the phosphoserine modification. 2 positions are modified to phosphotyrosine: Tyr-217 and Tyr-221. Ser-225 carries the phosphoserine modification. A Phosphotyrosine modification is found at Tyr-228. Phosphoserine occurs at positions 230 and 252. Tyr-257 carries the phosphotyrosine modification. Ser-268 and Ser-269 each carry phosphoserine. The residue at position 280 (Tyr-280) is a Phosphotyrosine. A Phosphoserine; by PAK5 modification is found at Ser-288. Residue Tyr-291 is modified to Phosphotyrosine. Residues Met-299–Arg-306 carry the Nuclear localization signal (NLS) motif. Residue Ser-300 is modified to Phosphoserine. Phosphothreonine is present on Thr-304. A phosphoserine mark is found at Ser-320, Ser-346, Ser-349, and Ser-352. ARM repeat units follow at residues Pro-358–Tyr-395, Asp-398–Phe-437, Gln-441–Thr-475, and Leu-476–Cys-516. Residue Lys-421 forms a Glycyl lysine isopeptide (Lys-Gly) (interchain with G-Cter in SUMO2) linkage. A Glycyl lysine isopeptide (Lys-Gly) (interchain with G-Cter in SUMO2) cross-link involves residue Lys-517. The Nuclear localization signal (NLS) signature appears at Ile-521–Thr-528. ARM repeat units lie at residues Leu-534 to Ser-573, Leu-583 to Gly-624, Ala-653 to Ala-693, Arg-700 to Val-739, Asp-740 to Asn-780, and Thr-781 to Leu-826. 4 positions are modified to phosphothreonine: Ile-566, Asp-572, Ser-587, and Glu-593. A Nuclear localization signal (NLS) motif is present at residues Gln-568–Leu-575. Ser-617 is modified (phosphoserine). The Nuclear localization signal (NLS) motif lies at Lys-622 to Phe-629. At Ser-713 the chain carries Phosphoserine. Residues Glu-788, Lys-794, and Asn-809 each carry the phosphothreonine modification. Ser-811 bears the Phosphoserine mark. Residues Ser-815, Leu-835, and Lys-841 each carry the phosphothreonine modification. Residue Ser-847 is modified to Phosphoserine. A disordered region spans residues Asn-855–Leu-944. Ala-856 carries the phosphothreonine modification. Residues Ser-857, Ser-859, and Ser-861 each carry the phosphoserine modification. Ser-862 bears the Phosphothreonine mark. Ser-864 bears the Phosphoserine mark. A Phosphotyrosine modification is found at Tyr-865. Ser-868 carries the post-translational modification Phosphoserine. A Phosphothreonine modification is found at Thr-869. A compositionally biased stretch (basic and acidic residues) spans Arg-875–Ile-888. Position 879 is a phosphoserine (Ser-879). Lys-882 participates in a covalent cross-link: Glycyl lysine isopeptide (Lys-Gly) (interchain with G-Cter in SUMO2). Residues Gln-889 and Ser-895 each carry the phosphothreonine modification. Positions Gln-889–Asn-908 are enriched in polar residues. Ser-899 bears the Phosphoserine mark. Tyr-904 is subject to Phosphotyrosine. A phosphothreonine mark is found at Thr-906, Arg-910, and Thr-916. The segment covering Glu-909–Asp-922 has biased composition (basic and acidic residues). A phosphoserine mark is found at Ser-920 and Ser-943.

Belongs to the beta-catenin family. In terms of assembly, belongs to a multiprotein cell-cell adhesion complex that also contains E-cadherin/CDH1, alpha-catenin/CTNNA1, beta-catenin/CTNNB1, and gamma-catenin/JUP. Component of a cadherin:catenin adhesion complex composed of at least of CDH26, beta-catenin/CTNNB1, alpha-catenin/CTNNA1 and p120 catenin/CTNND1. Binds to the C-terminal fragment of PSEN1 and mutually competes for CDH1. Interacts with ZBTB33. Interacts with GLIS2. Interacts with FER. Interacts with NANOS1 (via N-terminal region). Interacts (via N-terminus) with GNA12; the interaction regulates CDH1-mediated cell-cell adhesion. Interacts with GNA13. Interacts with CCDC85B. Interacts with PLPP3; negatively regulates the PLPP3-mediated stabilization of CTNNB1. Interacts with DSG3; the interaction facilitates DSG3 localization and retention at cell-cell junctions. Interacts with CTNND1/p120-catenin; the interaction controls CADH5 endocytosis. Phosphorylated by FER and other protein-tyrosine kinases. Phosphorylated at Ser-288 by PAK5. Dephosphorylated by PTPRJ. In terms of tissue distribution, expressed in vascular endothelium. Melanocytes and melanoma cells primarily express the long isoform 1A, whereas keratinocytes express shorter isoforms, especially 3A. The shortest isoform 4A, is detected in normal keratinocytes and melanocytes, and generally lost from cells derived from squamous cell carcinomas or melanomas. The C-terminal alternatively spliced exon B is present in the p120ctn transcripts in the colon, intestine and prostate, but lost in several tumor tissues derived from these organs.

The protein resides in the cell junction. It localises to the adherens junction. Its subcellular location is the cytoplasm. It is found in the nucleus. The protein localises to the cell membrane. In terms of biological role, key regulator of cell-cell adhesion that associates with and regulates the cell adhesion properties of both C-, E- and N-cadherins, being critical for their surface stability. Promotes localization and retention of DSG3 at cell-cell junctions, via its interaction with DSG3. Beside cell-cell adhesion, regulates gene transcription through several transcription factors including ZBTB33/Kaiso2 and GLIS2, and the activity of Rho family GTPases and downstream cytoskeletal dynamics. Implicated both in cell transformation by SRC and in ligand-induced receptor signaling through the EGF, PDGF, CSF-1 and ERBB2 receptors. This is Catenin delta-1 from Homo sapiens (Human).